The following is a 274-amino-acid chain: Sulfur carrier protein FdhD (274 aa).

The active-site Cysteine persulfide intermediate is the C121. F258–R263 lines the Mo-bis(molybdopterin guanine dinucleotide) pocket.

It belongs to the FdhD family.

It is found in the cytoplasm. Required for formate dehydrogenase (FDH) activity. Acts as a sulfur carrier protein that transfers sulfur from IscS to the molybdenum cofactor prior to its insertion into FDH. The protein is Sulfur carrier protein FdhD of Yersinia pseudotuberculosis serotype O:1b (strain IP 31758).